We begin with the raw amino-acid sequence, 130 residues long: Small ribosomal subunit protein uS9 (130 aa).

Belongs to the universal ribosomal protein uS9 family.

This is Small ribosomal subunit protein uS9 from Magnetococcus marinus (strain ATCC BAA-1437 / JCM 17883 / MC-1).